Reading from the N-terminus, the 116-residue chain is Large ribosomal subunit protein bL19 (116 aa).

This sequence belongs to the bacterial ribosomal protein bL19 family.

Its function is as follows. This protein is located at the 30S-50S ribosomal subunit interface and may play a role in the structure and function of the aminoacyl-tRNA binding site. The chain is Large ribosomal subunit protein bL19 from Mycoplasma mobile (strain ATCC 43663 / 163K / NCTC 11711) (Mesomycoplasma mobile).